An 859-amino-acid polypeptide reads, in one-letter code: Ribose import ATP-binding protein RbsA 1 (859 aa).

Residues 1–351 are disordered; the sequence is MRASLENGDD…AARAPDEASE (351 aa). Positions 1-353 are unknown; that stretch reads MRASLENGDD…RAPDEASEEA (353 aa). Residues 8-17 show a composition bias toward basic and acidic residues; it reads GDDHDAHRLV. A compositionally biased stretch (basic residues) spans 28-43; the sequence is RAARRRAFARARRGER. 3 stretches are compositionally biased toward basic and acidic residues: residues 44–80, 89–129, and 137–167; these read RARG…DRRA, RREQ…EEGG, and RERE…EGDR. Basic residues predominate over residues 168–179; sequence RRRRSRDPRRHP. Composition is skewed to basic and acidic residues over residues 193–214, 239–250, 263–281, 288–301, and 308–323; these read GARE…GARE, RLDGRAVRDRGV, AGGD…RDVR, DSPR…EEVG, and DSGR…REDV. ABC transporter domains lie at 358–594 and 607–851; these read LALT…VGRR and RDAA…TSDV. Residue 390–397 coordinates ATP; it reads GENGAGKS.

It belongs to the ABC transporter superfamily. Ribose importer (TC 3.A.1.2.1) family. In terms of assembly, the complex is composed of an ATP-binding protein (RbsA), two transmembrane proteins (RbsC) and a solute-binding protein (RbsB).

The protein resides in the cell inner membrane. It catalyses the reaction D-ribose(out) + ATP + H2O = D-ribose(in) + ADP + phosphate + H(+). Its function is as follows. Part of the ABC transporter complex RbsABC involved in ribose import. Responsible for energy coupling to the transport system. The protein is Ribose import ATP-binding protein RbsA 1 of Burkholderia pseudomallei (strain 1710b).